Consider the following 111-residue polypeptide: Ig kappa chain V-III region PC 2413 (111 aa).

A framework-1 region spans residues 1–23; the sequence is DIVLTQSPASLAVSLGQRATISC. Cys23 and Cys92 form a disulfide bridge. The tract at residues 24-38 is complementarity-determining-1; sequence RASESVVNYGVSLMH. The framework-2 stretch occupies residues 39 to 53; sequence WFQQKPGQPPKLLIY. Residues 54–60 form a complementarity-determining-2 region; it reads GASNRGS. A framework-3 region spans residues 61–92; the sequence is GVPARFSGSGSGTDFSLIIHPMEEDDSAMYFC. The interval 93 to 101 is complementarity-determining-3; it reads HQTKEVPWT. The framework-4 stretch occupies residues 102 to 111; that stretch reads FGGGTDLEIE.

This is Ig kappa chain V-III region PC 2413 from Mus musculus (Mouse).